Reading from the N-terminus, the 377-residue chain is E3 ubiquitin-protein ligase rififylin (377 aa).

Residues 55-107 (TGSEPSCKACGVHFASTTRKQTCLDCKKNFCMTCSSQEGNGPRLCLLCLRFRA) form an FYVE-type zinc finger. The SAP 1 domain maps to 115–134 (LMKMKVKDLRDYLSLHDIST). The interval 176-249 (LTQPQTSTVP…SVDSEDSFVP (74 aa)) is disordered. The segment covering 190-212 (GLPSSPAQVTSVPLAQDQETQQA) has biased composition (polar residues). Positions 235 to 245 (EDETQSVDSED) are enriched in acidic residues. Phosphoserine occurs at positions 240, 243, 246, and 254. The SAP 2 domain maps to 264–278 (IEGLTVRQLKEILAR). The RING-type zinc finger occupies 330-365 (CKICMDSPIDCVLLECGHMVTCTKCGKRMNECPICR).

In terms of assembly, interacts with CASP8 and CASP10. Interacts with RIPK1 (via protein kinase domain); involved in RIPK1 ubiquitination. Interacts with PRR5L. Interacts (via RING-type zinc finger) with p53/TP53; involved in p53/TP53 ubiquitination. Interacts (via RING-type zinc finger) with MDM2; the interaction stabilizes MDM2. In terms of processing, autoubiquitinated. Palmitoylated. Post-translationally, undergoes caspase-mediated cleavage upon death-receptor activation, by TNFSF10 for instance. May be mediated by the caspases CASP8 and CASP10 in a negative feedback loop. Ubiquitous. Detected in heart, brain, spleen, lung, liver, skeletal muscle, kidney, testis, thymus, whole embryo and embryonic stem cells.

It is found in the cytoplasm. The protein localises to the cytosol. The protein resides in the cell membrane. It localises to the recycling endosome membrane. It carries out the reaction S-ubiquitinyl-[E2 ubiquitin-conjugating enzyme]-L-cysteine + [acceptor protein]-L-lysine = [E2 ubiquitin-conjugating enzyme]-L-cysteine + N(6)-ubiquitinyl-[acceptor protein]-L-lysine.. The protein operates within protein modification; protein ubiquitination. Its function is as follows. E3 ubiquitin-protein ligase that regulates several biological processes through the ubiquitin-mediated proteasomal degradation of various target proteins. Mediates 'Lys-48'-linked polyubiquitination of PRR5L and its subsequent proteasomal degradation thereby indirectly regulating cell migration through the mTORC2 complex. Also ubiquitinates the caspases CASP8 and CASP10, promoting their proteasomal degradation, to negatively regulate apoptosis downstream of death domain receptors. Also negatively regulates the tumor necrosis factor-mediated signaling pathway through targeting of RIPK1 to ubiquitin-mediated proteasomal degradation. Negatively regulates p53/TP53 through its direct ubiquitination and targeting to proteasomal degradation. Indirectly, may also negatively regulate p53/TP53 through ubiquitination and degradation of SFN. May also play a role in endocytic recycling. The sequence is that of E3 ubiquitin-protein ligase rififylin from Mus musculus (Mouse).